A 424-amino-acid polypeptide reads, in one-letter code: Hemagglutinin-esterase (424 aa).

The first 16 residues, 1-16, serve as a signal peptide directing secretion; the sequence is MFLLPRFVLVSCIIGS. The esterase domain 1 stretch occupies residues 7-127; it reads FVLVSCIIGS…SNDIWMQNKG (121 aa). Residues 17 to 392 are Virion surface-facing; it reads LGFDNPPTNV…PICVYDPLPL (376 aa). Residue S40 is the Nucleophile of the active site. A disulfide bridge connects residues C44 and C65. N54, N89, N153, N236, and N301 each carry an N-linked (GlcNAc...) asparagine; by host glycan. Intrachain disulfides connect C113–C162, C197–C276, and C205–C249. A receptor binding region spans residues 128–266; it reads LFYTQVYKNM…GNYLAISNEL (139 aa). Residues 267–379 are esterase domain 2; it reads LLTVPTKAIC…RCPTAADINN (113 aa). C307 and C312 are disulfide-bonded. N316 carries an N-linked (GlcNAc...) asparagine; by host glycan. Active-site charge relay system residues include D326 and H329. C347 and C371 are oxidised to a cystine. A glycan (N-linked (GlcNAc...) asparagine; by host) is linked at N358. The helical transmembrane segment at 393 to 413 threads the bilayer; the sequence is ILLGILLGVAVIIIVVLLLYF. Residues 414–424 lie on the Intravirion side of the membrane; that stretch reads MVDNGTRLHDA. N-linked (GlcNAc...) asparagine; by host glycosylation occurs at N417.

Belongs to the influenza type C/coronaviruses hemagglutinin-esterase family. As to quaternary structure, homodimer; disulfide-linked. Forms a complex with the M protein in the pre-Golgi. Associates then with S-M complex to form a ternary complex S-M-HE. N-glycosylated in the host RER.

The protein localises to the virion membrane. It is found in the host cell membrane. It carries out the reaction N-acetyl-9-O-acetylneuraminate + H2O = N-acetylneuraminate + acetate + H(+). The enzyme catalyses N-acetyl-4-O-acetylneuraminate + H2O = N-acetylneuraminate + acetate + H(+). In terms of biological role, structural protein that makes short spikes at the surface of the virus. Contains receptor binding and receptor-destroying activities. Mediates de-O-acetylation of N-acetyl-4-O-acetylneuraminic acid, which is probably the receptor determinant recognized by the virus on the surface of erythrocytes and susceptible cells. This receptor-destroying activity is important for virus release as it probably helps preventing self-aggregation and ensures the efficient spread of the progeny virus from cell to cell. May serve as a secondary viral attachment protein for initiating infection, the spike protein being the major one. May become a target for both the humoral and the cellular branches of the immune system. This chain is Hemagglutinin-esterase, found in Bovine coronavirus (strain LY-138) (BCoV).